Here is a 94-residue protein sequence, read N- to C-terminus: Conotoxin Cal22a (94 aa).

An N-terminal signal peptide occupies residues Met-1–Gly-24. A propeptide spanning residues Gly-25–Ala-44 is cleaved from the precursor.

Post-translationally, contains 4 disulfide bonds. As to expression, expressed by the venom duct.

The protein resides in the secreted. Its function is as follows. Probable neurotoxin with unknown target. Possibly targets ion channels. This chain is Conotoxin Cal22a, found in Californiconus californicus (California cone).